Reading from the N-terminus, the 171-residue chain is 3-hydroxyanthranilate 3,4-dioxygenase (171 aa).

Residue R44 coordinates O2. Fe cation-binding residues include H48, E54, and H92. Substrate is bound at residue E54. Residues R96 and E106 each coordinate substrate. Positions 121, 126, 160, and 163 each coordinate a divalent metal cation.

It belongs to the 3-HAO family. The cofactor is Fe(2+).

It localises to the cytoplasm. The catalysed reaction is 3-hydroxyanthranilate + O2 = (2Z,4Z)-2-amino-3-carboxymuconate 6-semialdehyde. The protein operates within cofactor biosynthesis; NAD(+) biosynthesis; quinolinate from L-kynurenine: step 3/3. Its function is as follows. Catalyzes the oxidative ring opening of 3-hydroxyanthranilate to 2-amino-3-carboxymuconate semialdehyde, which spontaneously cyclizes to quinolinate. The polypeptide is 3-hydroxyanthranilate 3,4-dioxygenase (Yarrowia lipolytica (strain CLIB 122 / E 150) (Yeast)).